The chain runs to 342 residues: Farnesyl pyrophosphate synthase 2 (342 aa).

Residues K48, R51, and Q86 each coordinate isopentenyl diphosphate. Mg(2+)-binding residues include D93 and D97. R102 contacts dimethylallyl diphosphate. R103 serves as a coordination point for isopentenyl diphosphate. K190, T191, Q229, K246, and K255 together coordinate dimethylallyl diphosphate.

This sequence belongs to the FPP/GGPP synthase family. Requires Mg(2+) as cofactor.

The protein resides in the cytoplasm. The enzyme catalyses isopentenyl diphosphate + dimethylallyl diphosphate = (2E)-geranyl diphosphate + diphosphate. The catalysed reaction is isopentenyl diphosphate + (2E)-geranyl diphosphate = (2E,6E)-farnesyl diphosphate + diphosphate. It participates in isoprenoid biosynthesis; farnesyl diphosphate biosynthesis; farnesyl diphosphate from geranyl diphosphate and isopentenyl diphosphate: step 1/1. Its pathway is isoprenoid biosynthesis; geranyl diphosphate biosynthesis; geranyl diphosphate from dimethylallyl diphosphate and isopentenyl diphosphate: step 1/1. Its function is as follows. Catalyzes the sequential condensation of isopentenyl pyrophosphate with the allylic pyrophosphates, dimethylallyl pyrophosphate, and then with the resultant geranylpyrophosphate to the ultimate product farnesyl pyrophosphate. This Parthenium argentatum (Guayule rubber plant) protein is Farnesyl pyrophosphate synthase 2 (FPS2).